The primary structure comprises 351 residues: uncharacterized protein (351 aa).

The signal sequence occupies residues 1–27 (MKNKKRVLIASSLSCAILLLSAATTQA). The tract at residues 29–71 (SAHKDSQDQNKKEHVDKSQQKDKRNVTNKDKNSTVPDDIGKNG) is disordered. Residues 30-60 (AHKDSQDQNKKEHVDKSQQKDKRNVTNKDKN) are compositionally biased toward basic and acidic residues.

This sequence belongs to the aerolysin family.

This is an uncharacterized protein from Staphylococcus aureus (strain Mu50 / ATCC 700699).